Reading from the N-terminus, the 366-residue chain is MGDPTLRTDLGRVLVTGGSGFVGANLVTTLLERGHEVRSFDRVPSPLPAHPKLTTVVGDITNGEDVATAVAGIDTIFHTAAIIDLMGGATVTEEYRQRSFSVNVEGTKNLVHAGQQAGVQRFVYTASNSVVMGGQDIVNGDETLPYTTRFNDLYTETKVVAEKFVLGQNGEQGMLTCSIRPSGIWGRGDQTMFRKVFENVLAGHVKVLVGSKNIKLDNSYVHNLIHGFILAAEHLVPGGTAPGQAYFINDGEPLNMFEFARPVVVACGRKLPNIRVSGRLVHKAMMGWQWLHFKYGIREPLVEPLAVERLYLNNYFSIAKARRDLGYEPLFTTEQAMAECLPYYTDLFDTMVAQGAQPAVAAAPKS.

The active-site Proton donor is Tyr-154.

Belongs to the 3-beta-HSD family.

The catalysed reaction is testosterone + NAD(+) = androst-4-ene-3,17-dione + NADH + H(+). It carries out the reaction testosterone + NADP(+) = androst-4-ene-3,17-dione + NADPH + H(+). Its function is as follows. Catalyzes the degradation of testosterone into androstenedione. This chain is 3-beta-hydroxysteroid dehydrogenase, found in Mycolicibacterium neoaurum (Mycobacterium neoaurum).